Consider the following 383-residue polypeptide: L-lactate dehydrogenase (383 aa).

The 380-residue stretch at 1–380 (MIVSSTTDFR…NETILAERVP (380 aa)) folds into the FMN hydroxy acid dehydrogenase domain. A substrate-binding site is contributed by Tyr24. FMN contacts are provided by Ser106 and Gln127. Tyr129 serves as a coordination point for substrate. Residue Thr155 participates in FMN binding. Residue Arg164 participates in substrate binding. FMN is bound at residue Lys251. Residue His275 is the Proton acceptor of the active site. Arg278 is a substrate binding site. Residue 306–330 (DGGVRSGLDVVRMLALGARGVLIGR) coordinates FMN.

It belongs to the FMN-dependent alpha-hydroxy acid dehydrogenase family. FMN is required as a cofactor.

Its subcellular location is the cell inner membrane. The catalysed reaction is (S)-lactate + A = pyruvate + AH2. In terms of biological role, catalyzes the conversion of L-lactate to pyruvate. Is coupled to the respiratory chain. The sequence is that of L-lactate dehydrogenase from Caulobacter vibrioides (strain ATCC 19089 / CIP 103742 / CB 15) (Caulobacter crescentus).